A 139-amino-acid polypeptide reads, in one-letter code: Small ribosomal subunit protein bS6 (139 aa).

The disordered stretch occupies residues 120–139; it reads KGASKVETPTGPESTDIQEK. Residues 130 to 139 show a composition bias toward polar residues; that stretch reads GPESTDIQEK.

The protein belongs to the bacterial ribosomal protein bS6 family.

Functionally, binds together with bS18 to 16S ribosomal RNA. The protein is Small ribosomal subunit protein bS6 (rpsF) of Borreliella burgdorferi (strain ATCC 35210 / DSM 4680 / CIP 102532 / B31) (Borrelia burgdorferi).